A 163-amino-acid chain; its full sequence is Large ribosomal subunit protein uL11 (163 aa).

The tract at residues 1–25 is disordered; the sequence is MAGTIEVLVAGGQADPGPPLGPELG.

It belongs to the universal ribosomal protein uL11 family. As to quaternary structure, part of the ribosomal stalk of the 50S ribosomal subunit. Interacts with L10 and the large rRNA to form the base of the stalk. L10 forms an elongated spine to which L12 dimers bind in a sequential fashion forming a multimeric L10(L12)X complex.

In terms of biological role, forms part of the ribosomal stalk which helps the ribosome interact with GTP-bound translation factors. This Natronomonas pharaonis (strain ATCC 35678 / DSM 2160 / CIP 103997 / JCM 8858 / NBRC 14720 / NCIMB 2260 / Gabara) (Halobacterium pharaonis) protein is Large ribosomal subunit protein uL11.